A 162-amino-acid chain; its full sequence is Shikimate kinase (162 aa).

G11 to S16 contacts ATP. S15 is a binding site for Mg(2+). The substrate site is built by D33, R57, and G80. An ATP-binding site is contributed by R116. R132 contacts substrate.

It belongs to the shikimate kinase family. Monomer. Mg(2+) is required as a cofactor.

The protein localises to the cytoplasm. The enzyme catalyses shikimate + ATP = 3-phosphoshikimate + ADP + H(+). It functions in the pathway metabolic intermediate biosynthesis; chorismate biosynthesis; chorismate from D-erythrose 4-phosphate and phosphoenolpyruvate: step 5/7. Its function is as follows. Catalyzes the specific phosphorylation of the 3-hydroxyl group of shikimic acid using ATP as a cosubstrate. The sequence is that of Shikimate kinase from Helicobacter pylori (strain P12).